A 180-amino-acid polypeptide reads, in one-letter code: MIVYLHGFDSNSPGNHEKVLQLQFIDPDVRFISYSTLHPRHDMQYLLKEVDKAIQQGGDEKSLICGVGLGGFWAERIGFLCGIRQVAFNPNLYPQENMSGKIDRPEEYIDIASKCIDGFREKNRDRCLVVLSRHDEMLDSQRTAGDLHPYYEIVWDDKQNHKFKDLSPHLQRIKAFKTLG.

Belongs to the UPF0227 family.

The protein is UPF0227 protein YpsIP31758_1593 of Yersinia pseudotuberculosis serotype O:1b (strain IP 31758).